Here is a 248-residue protein sequence, read N- to C-terminus: UPF0246 protein RAF_ORF0648 (248 aa).

This sequence belongs to the UPF0246 family.

In Rickettsia africae (strain ESF-5), this protein is UPF0246 protein RAF_ORF0648.